The primary structure comprises 208 residues: Large ribosomal subunit protein uL3 (208 aa).

The tract at residues 116–148 (GFQGVIKRHGQSRGPMAHGSRYHRRPGSMGPVA) is disordered.

It belongs to the universal ribosomal protein uL3 family. Part of the 50S ribosomal subunit. Forms a cluster with proteins L14 and L19.

Its function is as follows. One of the primary rRNA binding proteins, it binds directly near the 3'-end of the 23S rRNA, where it nucleates assembly of the 50S subunit. The sequence is that of Large ribosomal subunit protein uL3 from Streptococcus pyogenes serotype M12 (strain MGAS2096).